Reading from the N-terminus, the 290-residue chain is Malonyl-[acyl-carrier protein] O-methyltransferase (290 aa).

This sequence belongs to the methyltransferase superfamily.

It carries out the reaction malonyl-[ACP] + S-adenosyl-L-methionine = malonyl-[ACP] methyl ester + S-adenosyl-L-homocysteine. Its pathway is cofactor biosynthesis; biotin biosynthesis. In terms of biological role, converts the free carboxyl group of a malonyl-thioester to its methyl ester by transfer of a methyl group from S-adenosyl-L-methionine (SAM). It allows to synthesize pimeloyl-ACP via the fatty acid synthetic pathway. The protein is Malonyl-[acyl-carrier protein] O-methyltransferase of Gallionella capsiferriformans (strain ES-2) (Gallionella ferruginea capsiferriformans (strain ES-2)).